We begin with the raw amino-acid sequence, 200 residues long: UPF0488 protein CG14286 (200 aa).

2 disordered regions span residues 1-28 and 139-174; these read MHKR…PVAE and KDFR…AEAG.

This sequence belongs to the UPF0488 family.

This chain is UPF0488 protein CG14286, found in Drosophila melanogaster (Fruit fly).